A 396-amino-acid polypeptide reads, in one-letter code: CCA-adding enzyme (396 aa).

Residues glycine 27 and arginine 30 each coordinate ATP. Glycine 27 and arginine 30 together coordinate CTP. Aspartate 40 and aspartate 42 together coordinate Mg(2+). 5 residues coordinate ATP: arginine 111, aspartate 154, arginine 157, arginine 160, and arginine 163. CTP is bound by residues arginine 111, aspartate 154, arginine 157, arginine 160, and arginine 163.

This sequence belongs to the tRNA nucleotidyltransferase/poly(A) polymerase family. Bacterial CCA-adding enzyme type 3 subfamily. As to quaternary structure, homodimer. Mg(2+) serves as cofactor.

The enzyme catalyses a tRNA precursor + 2 CTP + ATP = a tRNA with a 3' CCA end + 3 diphosphate. The catalysed reaction is a tRNA with a 3' CCA end + 2 CTP + ATP = a tRNA with a 3' CCACCA end + 3 diphosphate. Its function is as follows. Catalyzes the addition and repair of the essential 3'-terminal CCA sequence in tRNAs without using a nucleic acid template. Adds these three nucleotides in the order of C, C, and A to the tRNA nucleotide-73, using CTP and ATP as substrates and producing inorganic pyrophosphate. tRNA 3'-terminal CCA addition is required both for tRNA processing and repair. Also involved in tRNA surveillance by mediating tandem CCA addition to generate a CCACCA at the 3' terminus of unstable tRNAs. While stable tRNAs receive only 3'-terminal CCA, unstable tRNAs are marked with CCACCA and rapidly degraded. The polypeptide is CCA-adding enzyme (Pediococcus pentosaceus (strain ATCC 25745 / CCUG 21536 / LMG 10740 / 183-1w)).